The chain runs to 1381 residues: Hepatocyte growth factor receptor (1381 aa).

A signal peptide spans 1–24 (MKAPAVLAPGILMLLFTLVQRSNG). The Extracellular portion of the chain corresponds to 25–932 (ECKEALAKSE…VIVQPDQNFT (908 aa)). The Sema domain occupies 27 to 515 (KEALAKSEMN…TGKKITKIPL (489 aa)). N45 is a glycosylation site (N-linked (GlcNAc...) asparagine). 4 disulfide bridges follow: C95–C101, C98–C160, C133–C141, and C172–C175. Residue N106 is glycosylated (N-linked (GlcNAc...) asparagine). N-linked (GlcNAc...) asparagine glycosylation is present at N149. N202 is a glycosylation site (N-linked (GlcNAc...) asparagine). 2 disulfide bridges follow: C298–C363 and C385–C397. N399 and N405 each carry an N-linked (GlcNAc...) asparagine glycan. 4 cysteine pairs are disulfide-bonded: C520-C538, C526-C561, C529-C545, and C541-C551. 3 IPT/TIG domains span residues 563 to 655 (PAIY…FSYV), 657 to 739 (PIIT…FSYR), and 742 to 836 (PIVY…LIYV). T582 is a glycosylation site (O-linked (Man) threonine). Residues N607 and N635 are each glycosylated (N-linked (GlcNAc...) asparagine). T676 and T761 each carry an O-linked (Man) threonine glycan. N-linked (GlcNAc...) asparagine glycosylation is found at N785, N879, and N930. A helical membrane pass occupies residues 933-955 (GLIAGVVSISIALLLLLGLFLWL). Topologically, residues 956–1381 (KKRKQIKDLG…EDNADDEVDT (426 aa)) are cytoplasmic. S966 carries the phosphoserine modification. Phosphothreonine is present on T977. Phosphoserine is present on residues S990, S997, and S1000. Residue Y1003 is modified to Phosphotyrosine. The region spanning 1078 to 1345 (VHFNEVIGRG…RISAIFSTFI (268 aa)) is the Protein kinase domain. Residues 1084 to 1092 (IGRGHFGCV) and K1110 each bind ATP. Residue D1204 is the Proton acceptor of the active site. Residues 1212–1381 (LDEKFTVKVA…EDNADDEVDT (170 aa)) are interaction with RANBP9. Position 1230 is a phosphotyrosine (Y1230). Phosphotyrosine; by autocatalysis is present on residues Y1234 and Y1235. The residue at position 1289 (T1289) is a Phosphothreonine. Residues 1320-1359 (WHPKAEMRPSFSELVSRISAIFSTFIGEHYVHVNATYVNV) form an interaction with MUC20 region. Residues Y1349 and Y1356 each carry the phosphotyrosine; by autocatalysis modification. A Phosphotyrosine modification is found at Y1365.

This sequence belongs to the protein kinase superfamily. Tyr protein kinase family. In terms of assembly, heterodimer made of an alpha chain (50 kDa) and a beta chain (145 kDa) which are disulfide linked. Binds PLXNB1. Interacts when phosphorylated with downstream effectors including STAT3, PIK3R1, SRC, PCLG1, GRB2 and GAB1. Interacts with SPSB1, SPSB2 and SPSB4. Interacts with INPP5D/SHIP1. When phosphorylated at Tyr-1356, interacts with INPPL1/SHIP2. Interacts with RANBP9 and RANBP10, as well as SPSB1, SPSB2, SPSB3 and SPSB4. SPSB1 binding occurs in the presence and in the absence of HGF, however HGF treatment has a positive effect on this interaction. Interacts with MUC20; prevents interaction with GRB2 and suppresses hepatocyte growth factor-induced cell proliferation. Interacts with GRB10. Interacts with PTPN1 and PTPN2. Interacts with HSP90AA1 and HSP90AB1; the interaction suppresses MET kinase activity. Interacts with tensin TNS3. Interacts (when phosphorylated) with tensin TNS4 (via SH2 domain); the interaction increases MET protein stability by inhibiting MET endocytosis and subsequent lysosomal degradation. (Microbial infection) Immunoprecipitates with L.monocytogenes InlB. InlB probably dimerizes upon binding to MET, which encourages subsequent dimerization of MET. In terms of processing, autophosphorylated in response to ligand binding on Tyr-1234 and Tyr-1235 in the kinase domain leading to further phosphorylation of Tyr-1349 and Tyr-1356 in the C-terminal multifunctional docking site. Dephosphorylated by PTPRJ at Tyr-1349 and Tyr-1365. Dephosphorylated by PTPN1 and PTPN2. Post-translationally, ubiquitinated. Ubiquitination by CBL regulates the receptor stability and activity through proteasomal degradation. O-mannosylation of IPT/TIG domains by TMEM260 is required for protein maturation. O-mannosylated residues are composed of single mannose glycans that are not elongated or modified. In terms of processing, (Microbial infection) Tyrosine phosphorylation is stimulated by L.monocytogenes InlB.

It localises to the membrane. The enzyme catalyses L-tyrosyl-[protein] + ATP = O-phospho-L-tyrosyl-[protein] + ADP + H(+). With respect to regulation, in its inactive state, the C-terminal tail interacts with the catalytic domain and inhibits the kinase activity. Upon ligand binding, the C-terminal tail is displaced and becomes phosphorylated, thus increasing the kinase activity. Its function is as follows. Receptor tyrosine kinase that transduces signals from the extracellular matrix into the cytoplasm by binding to hepatocyte growth factor/HGF ligand. Regulates many physiological processes including proliferation, scattering, morphogenesis and survival. Ligand binding at the cell surface induces autophosphorylation of MET on its intracellular domain that provides docking sites for downstream signaling molecules. Following activation by ligand, interacts with the PI3-kinase subunit PIK3R1, PLCG1, SRC, GRB2, STAT3 or the adapter GAB1. Recruitment of these downstream effectors by MET leads to the activation of several signaling cascades including the RAS-ERK, PI3 kinase-AKT, or PLCgamma-PKC. The RAS-ERK activation is associated with the morphogenetic effects while PI3K/AKT coordinates prosurvival effects. During embryonic development, MET signaling plays a role in gastrulation, development and migration of muscles and neuronal precursors, angiogenesis and kidney formation. In adults, participates in wound healing as well as organ regeneration and tissue remodeling. Also promotes differentiation and proliferation of hematopoietic cells. Functionally, (Microbial infection) Acts as a receptor for Listeria monocytogenes internalin InlB, mediating entry of the pathogen into cells. This chain is Hepatocyte growth factor receptor (MET), found in Chlorocebus aethiops (Green monkey).